The sequence spans 306 residues: uncharacterized protein (306 aa).

The tract at residues 40 to 156 is disordered; it reads HETCSTPGED…AVASASAPTE (117 aa). The segment covering 64-73 has biased composition (low complexity); that stretch reads EGINLGEEGL. Basic residues predominate over residues 129–139; sequence KQHKKAKKRKS.

This is an uncharacterized protein from Rattus norvegicus (Rat).